The following is a 1038-amino-acid chain: Subtilisin-like protease SBT6.1 (1038 aa).

Positions 1–30 (MKVLGEASSYPYRSCIIVVFLSVSLFWLRP) are cleaved as a signal peptide. Residues 31 to 181 (STYHPQQQNL…TTLNWSRHLL (151 aa)) constitute a propeptide, removed in mature form. N-linked (GlcNAc...) asparagine glycans are attached at residues Asn-44, Asn-52, Asn-171, and Asn-175. The region spanning 175–473 (NWSRHLLAQK…VDLLESYEIL (299 aa)) is the Peptidase S8 domain. The Lumenal segment spans residues 182 to 1000 (AQKTQVTSMF…IDMPFLVPTR (819 aa)). The Charge relay system role is filled by Asp-212. N-linked (GlcNAc...) asparagine glycosylation occurs at Asn-230. The Charge relay system role is filled by His-243. An N-linked (GlcNAc...) asparagine glycan is attached at Asn-300. Catalysis depends on Ser-409, which acts as the Charge relay system. N-linked (GlcNAc...) asparagine glycosylation is found at Asn-513, Asn-579, Asn-902, and Asn-954. A helical transmembrane segment spans residues 1001-1021 (WIVLAGVVASGVLVLLSIWRI). Residues 1022–1038 (RQKRGRRRRASGSNRLA) are Cytoplasmic-facing.

This sequence belongs to the peptidase S8 family. As to quaternary structure, interacts with PME1 and PME5. As to expression, expressed in the vasculature of roots, cotyledons and leaves.

The protein resides in the golgi apparatus membrane. In terms of biological role, serine protease that catalyzes the first step (site-1 cleavage) in the proteolytic activation of various factors, prior to site-2 cleavage. Part of a regulated intramembrane proteolysis (RIP) cascade. Cleaves BZIP17 and BZIP28 after the Arg-Arg-Ile-Leu (RRIL) motif. May cleave BZIP49 after the RRIL motif. Targets the membrane-associated BZIP17 factor, which functions as a stress sensor and transducer in a signaling pathway that resembles an ER stress response. Following salt stress, BZIP17 is cleaved by SBT6.1 (S1P) and S2P at the C-terminus and the N-terminal bZIP component is translocated to the nucleus, where it activates the expression of salt stress response genes. Cleaves the pectinesterases PME1 after the Arg-Arg-Leu-Met (RRLM) and Arg-Arg-Leu-Leu (RRLL) motifs, and PME5 after the Arg-Arg-Leu-Leu (RRLL) and Arg-Lys-Leu-Met (RKLM) motifs. This processing and C-terminus release occurs in the Golgi apparatus and is required for cell wall targeting of pectinesterases. Thus, SBT6.1 mediates the regulated release of mature pectinesterases from the Golgi. Cleaves the peptide growth factor RALF23 after the Arg-Arg-Ile-Leu (RRIL) motif. This processing is required for RALF23 function in the negative regulation of brassinolide (BL)-mediated signaling pathway (e.g. BL-induced hypocotyl elongation and branching limitation). This Arabidopsis thaliana (Mouse-ear cress) protein is Subtilisin-like protease SBT6.1.